Consider the following 408-residue polypeptide: Substance-P receptor (408 aa).

Topologically, residues 1–32 (MNSNISAQNDSALNSTIQNGTKINQFIQPPWQ) are extracellular. N-linked (GlcNAc...) asparagine glycans are attached at residues Asn4, Asn9, Asn14, and Asn19. Residues 33–55 (IALWSVAYSIIVIVSLVGNIIVM) traverse the membrane as a helical segment. Residues 56–65 (WIIIAHKRMR) lie on the Cytoplasmic side of the membrane. The helical transmembrane segment at 66–87 (TVTNYFLVNLAFAEASMSAFNT) threads the bilayer. Residues 88 to 107 (VINFTYAIHNHWYYGLIYCK) are Extracellular-facing. The cysteines at positions 106 and 181 are disulfide-linked. The helical transmembrane segment at 108-129 (FHNFFPISAVFTSIYSMTAIAL) threads the bilayer. The Cytoplasmic segment spans residues 130–149 (DRYMAIIHPLKPRLSATATK). Residues 150 to 170 (IVICVIWSFSFCMAFPLGYYA) form a helical membrane-spanning segment. Topologically, residues 171 to 196 (DVYPMEGGDICYLNWPDSEENRKYEQ) are extracellular. The chain crosses the membrane as a helical span at residues 197 to 221 (VYQVLVFCLIYILPLLVIGCAYTFI). Residues 222–250 (GMTLWASEIPGDSSDRYHEQVVAKRKVVK) lie on the Cytoplasmic side of the membrane. A helical membrane pass occupies residues 251-272 (MMIVVVCTFAICWLPFHIFFLL). Residues 273–283 (QTLHEMTQKFY) are Extracellular-facing. A helical transmembrane segment spans residues 284-308 (QQFYLAIMWLAMSSTMYNPIIYCCL). Residues 309-408 (NDRFRIGFKH…SSSFYSNNLA (100 aa)) lie on the Cytoplasmic side of the membrane. A lipid anchor (S-palmitoyl cysteine) is attached at Cys323. The tract at residues 366-408 (DEEAEENGKSSKRLSLDLTSNGSSRSVCKTMSDSSSFYSNNLA) is disordered. Residues 382-408 (DLTSNGSSRSVCKTMSDSSSFYSNNLA) show a composition bias toward polar residues.

The protein belongs to the G-protein coupled receptor 1 family.

The protein localises to the cell membrane. Its function is as follows. This is a receptor for the tachykinin neuropeptide substance P. It is probably associated with G proteins that activate a phosphatidylinositol-calcium second messenger system. In Aquarana catesbeiana (American bullfrog), this protein is Substance-P receptor (TACR1).